A 210-amino-acid chain; its full sequence is N-(5'-phosphoribosyl)anthranilate isomerase (210 aa).

It belongs to the TrpF family.

The enzyme catalyses N-(5-phospho-beta-D-ribosyl)anthranilate = 1-(2-carboxyphenylamino)-1-deoxy-D-ribulose 5-phosphate. It functions in the pathway amino-acid biosynthesis; L-tryptophan biosynthesis; L-tryptophan from chorismate: step 3/5. This is N-(5'-phosphoribosyl)anthranilate isomerase from Trichormus variabilis (strain ATCC 29413 / PCC 7937) (Anabaena variabilis).